The sequence spans 743 residues: Polyribonucleotide nucleotidyltransferase (743 aa).

2 residues coordinate Mg(2+): Asp-489 and Asp-495. A KH domain is found at 556–618; the sequence is PRIEKMHIGK…PCIDAAIGMI (63 aa). An S1 motif domain is found at 628-698; the sequence is GETYPGKITS…KTGKFKLSRK (71 aa). Residues 704–743 are disordered; the sequence is PEGYVEPQPRERRERREGGREGGRNFERRGGDRDHREPRG.

It belongs to the polyribonucleotide nucleotidyltransferase family. Mg(2+) is required as a cofactor.

The protein localises to the cytoplasm. The catalysed reaction is RNA(n+1) + phosphate = RNA(n) + a ribonucleoside 5'-diphosphate. In terms of biological role, involved in mRNA degradation. Catalyzes the phosphorolysis of single-stranded polyribonucleotides processively in the 3'- to 5'-direction. The polypeptide is Polyribonucleotide nucleotidyltransferase (Porphyromonas gingivalis (strain ATCC 33277 / DSM 20709 / CIP 103683 / JCM 12257 / NCTC 11834 / 2561)).